The sequence spans 197 residues: Histocompatibility antigen 60c (197 aa).

An N-terminal signal peptide occupies residues 1–17 (MALLLLILESCSAGTYA). 3 N-linked (GlcNAc...) asparagine glycosylation sites follow: Asn-51, Asn-81, and Asn-114. The GPI-anchor amidated serine moiety is linked to residue Ser-177. Positions 178 to 197 (MACKSSPFDGLIMILLIYIL) are cleaved as a propeptide — removed in mature form.

The protein belongs to the NKG2D ligand family. Expressed in skin, and weakly in large intestine.

Its subcellular location is the cell membrane. Functionally, ligand for the KLRK1 immunosurveillance receptor. Binding to KLRK1 stimulates cell lysis in vitro. In Mus musculus (Mouse), this protein is Histocompatibility antigen 60c.